The following is a 150-amino-acid chain: Troponin C, isoform 2A (150 aa).

Position 1 is an N-acetylmethionine (M1). EF-hand domains follow at residues 7-42 (EQIGALQKAFDSFDTDSKGFITPETVGVILRMMGVK), 43-78 (ISEKNLQEVIAETDEDGSGELEFEEFVELAAKFLIE), 83-118 (ALKTELREAFRVYDKEGNGYITTDVLKEILRELDNR), and 119-150 (LTEEDLDSIIEEVDEDGSGTLDFNEFMEMMNG). Positions 56, 58, 60, 62, and 67 each coordinate Ca(2+). The Ca(2+) site is built by D132, D134, S136, T138, and E143.

It belongs to the troponin C family.

In terms of biological role, troponin is the central regulatory protein of striated muscle contraction. Tn consists of three components: Tn-I which is the inhibitor of actomyosin ATPase, Tn-T which contains the binding site for tropomyosin and Tn-C. The binding of calcium to Tn-C abolishes the inhibitory action of Tn on actin filaments. The polypeptide is Troponin C, isoform 2A (Homarus americanus (American lobster)).